Consider the following 163-residue polypeptide: Ribosome maturation factor RimM (163 aa).

The PRC barrel domain maps to 90–161 (EGRHYWGDLE…VVVDPPEGLL (72 aa)).

It belongs to the RimM family. In terms of assembly, binds ribosomal protein uS19.

It localises to the cytoplasm. Its function is as follows. An accessory protein needed during the final step in the assembly of 30S ribosomal subunit, possibly for assembly of the head region. Essential for efficient processing of 16S rRNA. May be needed both before and after RbfA during the maturation of 16S rRNA. It has affinity for free ribosomal 30S subunits but not for 70S ribosomes. This chain is Ribosome maturation factor RimM, found in Anaeromyxobacter dehalogenans (strain 2CP-C).